We begin with the raw amino-acid sequence, 398 residues long: S-adenosylmethionine synthase (398 aa).

Residue His-26 participates in ATP binding. Asp-28 contributes to the Mg(2+) binding site. Glu-54 contacts K(+). Residues Glu-67 and Gln-110 each coordinate L-methionine. A flexible loop region spans residues 110 to 120 (QSPDIAQGVNE). Residues 177–179 (DAK), 243–244 (RF), Asp-252, 258–259 (RK), Ala-275, and Lys-279 contribute to the ATP site. Asp-252 provides a ligand contact to L-methionine. Position 283 (Lys-283) interacts with L-methionine.

The protein belongs to the AdoMet synthase family. Homotetramer; dimer of dimers. The cofactor is Mg(2+). K(+) is required as a cofactor.

Its subcellular location is the cytoplasm. It carries out the reaction L-methionine + ATP + H2O = S-adenosyl-L-methionine + phosphate + diphosphate. It participates in amino-acid biosynthesis; S-adenosyl-L-methionine biosynthesis; S-adenosyl-L-methionine from L-methionine: step 1/1. Catalyzes the formation of S-adenosylmethionine (AdoMet) from methionine and ATP. The overall synthetic reaction is composed of two sequential steps, AdoMet formation and the subsequent tripolyphosphate hydrolysis which occurs prior to release of AdoMet from the enzyme. In Desulfotalea psychrophila (strain LSv54 / DSM 12343), this protein is S-adenosylmethionine synthase.